The following is a 930-amino-acid chain: Protein translocase subunit SecA (930 aa).

ATP is bound by residues glutamine 83, 101-105, and aspartate 491; that span reads GEGKT.

It belongs to the SecA family. Monomer and homodimer. Part of the essential Sec protein translocation apparatus which comprises SecA, SecYEG and auxiliary proteins SecDF. Other proteins may also be involved.

Its subcellular location is the cell inner membrane. The protein localises to the cellular thylakoid membrane. It is found in the cytoplasm. The catalysed reaction is ATP + H2O + cellular proteinSide 1 = ADP + phosphate + cellular proteinSide 2.. In terms of biological role, part of the Sec protein translocase complex. Interacts with the SecYEG preprotein conducting channel. Has a central role in coupling the hydrolysis of ATP to the transfer of proteins into and across the cell membrane, serving as an ATP-driven molecular motor driving the stepwise translocation of polypeptide chains across the membrane. Functionally, probably participates in protein translocation into and across both the cytoplasmic and thylakoid membranes in cyanobacterial cells. The protein is Protein translocase subunit SecA of Trichormus variabilis (strain ATCC 29413 / PCC 7937) (Anabaena variabilis).